A 369-amino-acid polypeptide reads, in one-letter code: 4-hydroxy-3-methylbut-2-en-1-yl diphosphate synthase (flavodoxin) (369 aa).

4 residues coordinate [4Fe-4S] cluster: Cys-270, Cys-273, Cys-305, and Glu-312.

Belongs to the IspG family. [4Fe-4S] cluster is required as a cofactor.

It carries out the reaction (2E)-4-hydroxy-3-methylbut-2-enyl diphosphate + oxidized [flavodoxin] + H2O + 2 H(+) = 2-C-methyl-D-erythritol 2,4-cyclic diphosphate + reduced [flavodoxin]. Its pathway is isoprenoid biosynthesis; isopentenyl diphosphate biosynthesis via DXP pathway; isopentenyl diphosphate from 1-deoxy-D-xylulose 5-phosphate: step 5/6. Its function is as follows. Converts 2C-methyl-D-erythritol 2,4-cyclodiphosphate (ME-2,4cPP) into 1-hydroxy-2-methyl-2-(E)-butenyl 4-diphosphate. The polypeptide is 4-hydroxy-3-methylbut-2-en-1-yl diphosphate synthase (flavodoxin) (Pseudomonas putida (strain ATCC 700007 / DSM 6899 / JCM 31910 / BCRC 17059 / LMG 24140 / F1)).